A 589-amino-acid polypeptide reads, in one-letter code: Aspartate--tRNA(Asp/Asn) ligase (589 aa).

Position 175 (Glu-175) interacts with L-aspartate. Residues Gln-199–Lys-202 are aspartate. Arg-221 is a binding site for L-aspartate. Residues Arg-221–Glu-223 and Gln-230 contribute to the ATP site. His-451 contributes to the L-aspartate binding site. Glu-485 lines the ATP pocket. Arg-492 provides a ligand contact to L-aspartate. Gly-537–Arg-540 serves as a coordination point for ATP.

This sequence belongs to the class-II aminoacyl-tRNA synthetase family. Type 1 subfamily. As to quaternary structure, homodimer.

Its subcellular location is the cytoplasm. It carries out the reaction tRNA(Asx) + L-aspartate + ATP = L-aspartyl-tRNA(Asx) + AMP + diphosphate. In terms of biological role, aspartyl-tRNA synthetase with relaxed tRNA specificity since it is able to aspartylate not only its cognate tRNA(Asp) but also tRNA(Asn). Reaction proceeds in two steps: L-aspartate is first activated by ATP to form Asp-AMP and then transferred to the acceptor end of tRNA(Asp/Asn). This chain is Aspartate--tRNA(Asp/Asn) ligase, found in Roseiflexus sp. (strain RS-1).